We begin with the raw amino-acid sequence, 424 residues long: D-inositol 3-phosphate glycosyltransferase (424 aa).

H21 is a binding site for 1D-myo-inositol 3-phosphate. Residues 27-28 and G35 each bind UDP-N-acetyl-alpha-D-glucosamine; that span reads QP. 1D-myo-inositol 3-phosphate contacts are provided by residues 32–37, K90, Y123, T147, and R167; that span reads DAGGMN. R241, K246, and Q299 together coordinate UDP-N-acetyl-alpha-D-glucosamine. Positions 308, 309, and 311 each coordinate Mg(2+). UDP-N-acetyl-alpha-D-glucosamine contacts are provided by E321 and E329. T335 serves as a coordination point for Mg(2+).

It belongs to the glycosyltransferase group 1 family. MshA subfamily. Homodimer.

It catalyses the reaction 1D-myo-inositol 3-phosphate + UDP-N-acetyl-alpha-D-glucosamine = 1D-myo-inositol 2-acetamido-2-deoxy-alpha-D-glucopyranoside 3-phosphate + UDP + H(+). Catalyzes the transfer of a N-acetyl-glucosamine moiety to 1D-myo-inositol 3-phosphate to produce 1D-myo-inositol 2-acetamido-2-deoxy-glucopyranoside 3-phosphate in the mycothiol biosynthesis pathway. The protein is D-inositol 3-phosphate glycosyltransferase of Mycobacterium avium (strain 104).